We begin with the raw amino-acid sequence, 70 residues long: Beta sliding clamp (70 aa).

The protein belongs to the beta sliding clamp family. Forms a ring-shaped head-to-tail homodimer around DNA which binds and tethers DNA polymerases and other proteins to the DNA. The DNA replisome complex has a single clamp-loading complex (3 tau and 1 each of delta, delta', psi and chi subunits) which binds 3 Pol III cores (1 core on the leading strand and 2 on the lagging strand) each with a beta sliding clamp dimer. Additional proteins in the replisome are other copies of gamma, psi and chi, Ssb, DNA helicase and RNA primase.

It localises to the cytoplasm. Confers DNA tethering and processivity to DNA polymerases and other proteins. Acts as a clamp, forming a ring around DNA (a reaction catalyzed by the clamp-loading complex) which diffuses in an ATP-independent manner freely and bidirectionally along dsDNA. Initially characterized for its ability to contact the catalytic subunit of DNA polymerase III (Pol III), a complex, multichain enzyme responsible for most of the replicative synthesis in bacteria; Pol III exhibits 3'-5' exonuclease proofreading activity. The beta chain is required for initiation of replication as well as for processivity of DNA replication. This Rhodobacter capsulatus (Rhodopseudomonas capsulata) protein is Beta sliding clamp (dnaN).